We begin with the raw amino-acid sequence, 29 residues long: Cytochrome b6-f complex subunit 8 (29 aa).

A helical membrane pass occupies residues 3 to 23 (IVSIAWAALMVVFSFSLSLVV).

It belongs to the PetN family. As to quaternary structure, the 4 large subunits of the cytochrome b6-f complex are cytochrome b6, subunit IV (17 kDa polypeptide, PetD), cytochrome f and the Rieske protein, while the 4 small subunits are PetG, PetL, PetM and PetN. The complex functions as a dimer.

The protein resides in the plastid. It is found in the chloroplast thylakoid membrane. Functionally, component of the cytochrome b6-f complex, which mediates electron transfer between photosystem II (PSII) and photosystem I (PSI), cyclic electron flow around PSI, and state transitions. This chain is Cytochrome b6-f complex subunit 8, found in Phaseolus vulgaris (Kidney bean).